The primary structure comprises 259 residues: Thiazole synthase (259 aa).

Lys-98 (schiff-base intermediate with DXP) is an active-site residue. Residues Gly-159, 185-186, and 207-208 contribute to the 1-deoxy-D-xylulose 5-phosphate site; these read AG and NS.

It belongs to the ThiG family. Homotetramer. Forms heterodimers with either ThiH or ThiS.

It localises to the cytoplasm. It carries out the reaction [ThiS sulfur-carrier protein]-C-terminal-Gly-aminoethanethioate + 2-iminoacetate + 1-deoxy-D-xylulose 5-phosphate = [ThiS sulfur-carrier protein]-C-terminal Gly-Gly + 2-[(2R,5Z)-2-carboxy-4-methylthiazol-5(2H)-ylidene]ethyl phosphate + 2 H2O + H(+). The protein operates within cofactor biosynthesis; thiamine diphosphate biosynthesis. Its function is as follows. Catalyzes the rearrangement of 1-deoxy-D-xylulose 5-phosphate (DXP) to produce the thiazole phosphate moiety of thiamine. Sulfur is provided by the thiocarboxylate moiety of the carrier protein ThiS. In vitro, sulfur can be provided by H(2)S. The chain is Thiazole synthase from Chlorobium limicola (strain DSM 245 / NBRC 103803 / 6330).